A 461-amino-acid chain; its full sequence is Phosphomethylpyrimidine synthase (461 aa).

Residues N80, M109, Y139, H175, 195 to 197 (SRG), 236 to 239 (DSLR), and E275 contribute to the substrate site. Position 279 (H279) interacts with Zn(2+). Residue Y302 participates in substrate binding. H343 lines the Zn(2+) pocket. [4Fe-4S] cluster-binding residues include C423, C426, and C431.

Belongs to the ThiC family. [4Fe-4S] cluster serves as cofactor.

The catalysed reaction is 5-amino-1-(5-phospho-beta-D-ribosyl)imidazole + S-adenosyl-L-methionine = 4-amino-2-methyl-5-(phosphooxymethyl)pyrimidine + CO + 5'-deoxyadenosine + formate + L-methionine + 3 H(+). It participates in cofactor biosynthesis; thiamine diphosphate biosynthesis. Functionally, catalyzes the synthesis of the hydroxymethylpyrimidine phosphate (HMP-P) moiety of thiamine from aminoimidazole ribotide (AIR) in a radical S-adenosyl-L-methionine (SAM)-dependent reaction. The sequence is that of Phosphomethylpyrimidine synthase from Picosynechococcus sp. (strain ATCC 27264 / PCC 7002 / PR-6) (Agmenellum quadruplicatum).